We begin with the raw amino-acid sequence, 324 residues long: Phospho-N-acetylmuramoyl-pentapeptide-transferase (324 aa).

10 helical membrane passes run 5–25 (AIVIAMAVSFLITVVLSPLFI), 57–77 (IMILLAIVATTLWITPKIAGL), 81–101 (TYLLLLVTVGYGVLGFLDDMI), 117–137 (FIGQLLIAAIFFAVYRQSGFS), 147–167 (WSVDLGWAYGVLLLFMLVGGS), 176–196 (LDGLLAGTAAIAFGAYAVLAW), 203–223 (VAVFCVAVVGAVLGFLVFNAH), 227–247 (VFMGDTGSLALGGAIAAVAVL), 250–270 (LELLLVIIGGVFVIETLSVII), and 302–322 (IVVTFWAVGLLFAMLGIYIEV).

This sequence belongs to the glycosyltransferase 4 family. MraY subfamily. Mg(2+) is required as a cofactor.

Its subcellular location is the cell membrane. It carries out the reaction UDP-N-acetyl-alpha-D-muramoyl-L-alanyl-gamma-D-glutamyl-meso-2,6-diaminopimeloyl-D-alanyl-D-alanine + di-trans,octa-cis-undecaprenyl phosphate = di-trans,octa-cis-undecaprenyl diphospho-N-acetyl-alpha-D-muramoyl-L-alanyl-D-glutamyl-meso-2,6-diaminopimeloyl-D-alanyl-D-alanine + UMP. It functions in the pathway cell wall biogenesis; peptidoglycan biosynthesis. Its function is as follows. Catalyzes the initial step of the lipid cycle reactions in the biosynthesis of the cell wall peptidoglycan: transfers peptidoglycan precursor phospho-MurNAc-pentapeptide from UDP-MurNAc-pentapeptide onto the lipid carrier undecaprenyl phosphate, yielding undecaprenyl-pyrophosphoryl-MurNAc-pentapeptide, known as lipid I. The protein is Phospho-N-acetylmuramoyl-pentapeptide-transferase of Geobacillus kaustophilus (strain HTA426).